A 191-amino-acid chain; its full sequence is Adenine phosphoribosyltransferase (191 aa).

Belongs to the purine/pyrimidine phosphoribosyltransferase family. In terms of assembly, homodimer.

It is found in the cytoplasm. It catalyses the reaction AMP + diphosphate = 5-phospho-alpha-D-ribose 1-diphosphate + adenine. The protein operates within purine metabolism; AMP biosynthesis via salvage pathway; AMP from adenine: step 1/1. In terms of biological role, catalyzes a salvage reaction resulting in the formation of AMP, that is energically less costly than de novo synthesis. The sequence is that of Adenine phosphoribosyltransferase from Nocardia farcinica (strain IFM 10152).